The sequence spans 146 residues: Ferric uptake regulation protein 2 (146 aa).

Zn(2+)-binding residues include Cys-96 and Cys-99.

Belongs to the Fur family.

The protein localises to the cytoplasm. Its function is as follows. Acts as a global negative controlling element, employing Fe(2+) as a cofactor to bind the operator of the repressed genes. In Mycolicibacterium fortuitum (Mycobacterium fortuitum), this protein is Ferric uptake regulation protein 2 (fur2).